The following is a 340-amino-acid chain: ATP-dependent 6-phosphofructokinase (340 aa).

G11 contacts ATP. Residue 21–25 (RAVVR) coordinates ADP. Residues 72–73 (RY) and 102–105 (GDGS) contribute to the ATP site. Mg(2+) is bound at residue D103. 125–127 (TID) contributes to the substrate binding site. D127 acts as the Proton acceptor in catalysis. Residue R154 coordinates ADP. Residues R162 and 169-171 (MGR) contribute to the substrate site. Residues 185 to 187 (GAD), K211, and 213 to 215 (KNH) each bind ADP. Residues E222, R244, and 250-253 (HIQR) contribute to the substrate site.

This sequence belongs to the phosphofructokinase type A (PFKA) family. ATP-dependent PFK group I subfamily. Prokaryotic clade 'B1' sub-subfamily. Homotetramer. Mg(2+) serves as cofactor.

It localises to the cytoplasm. It carries out the reaction beta-D-fructose 6-phosphate + ATP = beta-D-fructose 1,6-bisphosphate + ADP + H(+). Its pathway is carbohydrate degradation; glycolysis; D-glyceraldehyde 3-phosphate and glycerone phosphate from D-glucose: step 3/4. Allosterically activated by ADP and other diphosphonucleosides, and allosterically inhibited by phosphoenolpyruvate. Functionally, catalyzes the phosphorylation of D-fructose 6-phosphate to fructose 1,6-bisphosphate by ATP, the first committing step of glycolysis. This is ATP-dependent 6-phosphofructokinase from Lactococcus lactis subsp. lactis (Streptococcus lactis).